A 655-amino-acid chain; its full sequence is Macrolide export ATP-binding/permease protein MacB (655 aa).

Residues 6–244 (IELRDVWREF…DALAGDEGPE (239 aa)) enclose the ABC transporter domain. Residue 42-49 (GASGSGKS) coordinates ATP. The interval 225–252 (DQARPDAPPLDALAGDEGPEAPRPAPQP) is disordered. The next 4 helical transmembrane spans lie at 280–300 (LTMLGIIIGIAAVVSVVALGA), 527–547 (LTLLVSMIAVISLVVVGIGVM), 583–603 (VLVCLIGGVLGILLSLSIGVL), and 620–640 (SMVLAFVCSTLIGVAFGFLPA).

It belongs to the ABC transporter superfamily. Macrolide exporter (TC 3.A.1.122) family. As to quaternary structure, homodimer.

The protein resides in the cell inner membrane. Non-canonical ABC transporter that contains transmembrane domains (TMD), which form a pore in the inner membrane, and an ATP-binding domain (NBD), which is responsible for energy generation. Confers resistance against macrolides. This chain is Macrolide export ATP-binding/permease protein MacB, found in Bordetella avium (strain 197N).